The primary structure comprises 430 residues: Adenylosuccinate synthetase (430 aa).

GTP-binding positions include 12-18 (GDEGKGK) and 40-42 (GHT). Residue D13 is the Proton acceptor of the active site. 2 residues coordinate Mg(2+): D13 and G40. IMP contacts are provided by residues 13–16 (DEGK), 38–41 (NAGH), T128, R142, Q223, T238, and R302. The active-site Proton donor is H41. 298–304 (VNTGRKR) provides a ligand contact to substrate. GTP contacts are provided by residues R304, 330-332 (KLD), and 412-414 (GVG).

It belongs to the adenylosuccinate synthetase family. Homodimer. The cofactor is Mg(2+).

Its subcellular location is the cytoplasm. The enzyme catalyses IMP + L-aspartate + GTP = N(6)-(1,2-dicarboxyethyl)-AMP + GDP + phosphate + 2 H(+). It functions in the pathway purine metabolism; AMP biosynthesis via de novo pathway; AMP from IMP: step 1/2. Functionally, plays an important role in the de novo pathway of purine nucleotide biosynthesis. Catalyzes the first committed step in the biosynthesis of AMP from IMP. This chain is Adenylosuccinate synthetase, found in Corynebacterium aurimucosum (strain ATCC 700975 / DSM 44827 / CIP 107346 / CN-1) (Corynebacterium nigricans).